The following is a 217-amino-acid chain: 4-hydroxy-tetrahydrodipicolinate reductase (217 aa).

NAD(+) is bound by residues 7-12 (GFKGKM), 71-73 (GTT), and 95-98 (SYNF). The active-site Proton donor/acceptor is the histidine 127. Histidine 128 contributes to the (S)-2,3,4,5-tetrahydrodipicolinate binding site. The active-site Proton donor is lysine 131. 137–138 (GT) serves as a coordination point for (S)-2,3,4,5-tetrahydrodipicolinate.

This sequence belongs to the DapB family.

It localises to the cytoplasm. The enzyme catalyses (S)-2,3,4,5-tetrahydrodipicolinate + NAD(+) + H2O = (2S,4S)-4-hydroxy-2,3,4,5-tetrahydrodipicolinate + NADH + H(+). The catalysed reaction is (S)-2,3,4,5-tetrahydrodipicolinate + NADP(+) + H2O = (2S,4S)-4-hydroxy-2,3,4,5-tetrahydrodipicolinate + NADPH + H(+). It participates in amino-acid biosynthesis; L-lysine biosynthesis via DAP pathway; (S)-tetrahydrodipicolinate from L-aspartate: step 4/4. Catalyzes the conversion of 4-hydroxy-tetrahydrodipicolinate (HTPA) to tetrahydrodipicolinate. The polypeptide is 4-hydroxy-tetrahydrodipicolinate reductase (Thermosipho africanus (strain TCF52B)).